The following is a 124-amino-acid chain: Small ribosomal subunit protein uS12 (124 aa).

D89 carries the post-translational modification 3-methylthioaspartic acid. Positions 105 to 124 are disordered; that stretch reads QGVKNRKQARSKYGAKMEKK.

The protein belongs to the universal ribosomal protein uS12 family. Part of the 30S ribosomal subunit. Contacts proteins S8 and S17. May interact with IF1 in the 30S initiation complex.

Functionally, with S4 and S5 plays an important role in translational accuracy. Interacts with and stabilizes bases of the 16S rRNA that are involved in tRNA selection in the A site and with the mRNA backbone. Located at the interface of the 30S and 50S subunits, it traverses the body of the 30S subunit contacting proteins on the other side and probably holding the rRNA structure together. The combined cluster of proteins S8, S12 and S17 appears to hold together the shoulder and platform of the 30S subunit. This is Small ribosomal subunit protein uS12 from Renibacterium salmoninarum (strain ATCC 33209 / DSM 20767 / JCM 11484 / NBRC 15589 / NCIMB 2235).